Here is a 144-residue protein sequence, read N- to C-terminus: D-aminoacyl-tRNA deacylase (144 aa).

The Gly-cisPro motif, important for rejection of L-amino acids signature appears at 136-137; the sequence is GP.

It belongs to the DTD family. In terms of assembly, homodimer.

The protein resides in the cytoplasm. It catalyses the reaction glycyl-tRNA(Ala) + H2O = tRNA(Ala) + glycine + H(+). The catalysed reaction is a D-aminoacyl-tRNA + H2O = a tRNA + a D-alpha-amino acid + H(+). An aminoacyl-tRNA editing enzyme that deacylates mischarged D-aminoacyl-tRNAs. Also deacylates mischarged glycyl-tRNA(Ala), protecting cells against glycine mischarging by AlaRS. Acts via tRNA-based rather than protein-based catalysis; rejects L-amino acids rather than detecting D-amino acids in the active site. By recycling D-aminoacyl-tRNA to D-amino acids and free tRNA molecules, this enzyme counteracts the toxicity associated with the formation of D-aminoacyl-tRNA entities in vivo and helps enforce protein L-homochirality. The sequence is that of D-aminoacyl-tRNA deacylase from Vibrio atlanticus (strain LGP32) (Vibrio splendidus (strain Mel32)).